Consider the following 354-residue polypeptide: MEQNVFFLPHEGLKLAELAEFLGAELVNSDYADVIVRSVAPISRARAGDVCYILSRRSRDELATCEASAVICDKALADLVPQHLPVMLSSNPHAAFAMAGGLFYPAALRPVAFSGESEIAPSAVIDPSARLEKGVIVEPMAVIGAHAEIGEGTRIGAHSIIGPNVKIGRDCSIAAGASIICALLGNGVIIHNGARIGQDGFGYAPGPRGMIKIVQIGRVIIQDNVEIGANTTIDRGAMDDTVIGEGTKIDNQVQIGHNVQIGRHCAIVALVGIAGSAKIGNGVQIGGQVGIKGHVTIGDGVQIAAQSGIMTDLAAGGQYGGTPGRPLNDYLRDVAQQMSKTKLRGKKPGGEQND.

The Proton acceptor role is filled by H257.

The protein belongs to the transferase hexapeptide repeat family. LpxD subfamily. Homotrimer.

It carries out the reaction a UDP-3-O-[(3R)-3-hydroxyacyl]-alpha-D-glucosamine + a (3R)-hydroxyacyl-[ACP] = a UDP-2-N,3-O-bis[(3R)-3-hydroxyacyl]-alpha-D-glucosamine + holo-[ACP] + H(+). It participates in bacterial outer membrane biogenesis; LPS lipid A biosynthesis. In terms of biological role, catalyzes the N-acylation of UDP-3-O-acylglucosamine using 3-hydroxyacyl-ACP as the acyl donor. Is involved in the biosynthesis of lipid A, a phosphorylated glycolipid that anchors the lipopolysaccharide to the outer membrane of the cell. The polypeptide is UDP-3-O-acylglucosamine N-acyltransferase (Rhizobium johnstonii (strain DSM 114642 / LMG 32736 / 3841) (Rhizobium leguminosarum bv. viciae)).